The following is a 195-amino-acid chain: ATP-dependent Clp protease proteolytic subunit (195 aa).

The active-site Nucleophile is Ser94. His119 is a catalytic residue.

The protein belongs to the peptidase S14 family. Component of the chloroplastic Clp protease core complex.

It is found in the plastid. It localises to the chloroplast stroma. It catalyses the reaction Hydrolysis of proteins to small peptides in the presence of ATP and magnesium. alpha-casein is the usual test substrate. In the absence of ATP, only oligopeptides shorter than five residues are hydrolyzed (such as succinyl-Leu-Tyr-|-NHMec, and Leu-Tyr-Leu-|-Tyr-Trp, in which cleavage of the -Tyr-|-Leu- and -Tyr-|-Trp bonds also occurs).. In terms of biological role, cleaves peptides in various proteins in a process that requires ATP hydrolysis. Has a chymotrypsin-like activity. Plays a major role in the degradation of misfolded proteins. This Cycas taitungensis (Prince sago) protein is ATP-dependent Clp protease proteolytic subunit.